The following is a 187-amino-acid chain: Photosystem I assembly protein Ycf4 (187 aa).

The next 2 helical transmembrane spans lie at Y25–S45 and M69–W89.

Belongs to the Ycf4 family.

The protein localises to the cellular thylakoid membrane. Its function is as follows. Seems to be required for the assembly of the photosystem I complex. The chain is Photosystem I assembly protein Ycf4 from Trichodesmium erythraeum (strain IMS101).